The chain runs to 495 residues: Phage-like element PBSX protein XkdE (495 aa).

This sequence belongs to the phage portal family. PBSX subfamily.

The polypeptide is Phage-like element PBSX protein XkdE (xkdE) (Bacillus subtilis (strain 168)).